The sequence spans 185 residues: Small ribosomal subunit protein bS16 (185 aa).

The interval 83–185 (QWTHGNNPEK…APASEETTEG (103 aa)) is disordered. Basic and acidic residues predominate over residues 89 to 125 (NPEKAKPGKKAQERDAERTQRDADRVAAEAQAKEDAK). 2 stretches are compositionally biased toward low complexity: residues 126–146 (AAAAEAAEAAAAAAAEAAAAP) and 159–176 (VEAAAEEAPAAEAAAEEA).

The protein belongs to the bacterial ribosomal protein bS16 family.

This is Small ribosomal subunit protein bS16 from Caulobacter sp. (strain K31).